Consider the following 286-residue polypeptide: Flagellar filament 33 kDa core protein (286 aa).

The protein belongs to the bacterial flagellin family. As to quaternary structure, the flagellum consists of an outer layer composed of repeating units of FlaA around a core that contains several antigenically related polypeptides.

It is found in the periplasmic flagellum. Its subcellular location is the periplasm. Component of the core of the flagella. The polypeptide is Flagellar filament 33 kDa core protein (Treponema phagedenis).